A 401-amino-acid chain; its full sequence is S-adenosylmethionine synthase (401 aa).

136–141 (GTGSSD) contributes to the ATP binding site. The disordered stretch occupies residues 278–305 (GDDGSVGRGNRSNGLITPSRPMSMEATS).

The protein belongs to the AdoMet synthase 2 family. Mg(2+) is required as a cofactor.

It carries out the reaction L-methionine + ATP + H2O = S-adenosyl-L-methionine + phosphate + diphosphate. It functions in the pathway amino-acid biosynthesis; S-adenosyl-L-methionine biosynthesis; S-adenosyl-L-methionine from L-methionine: step 1/1. In terms of biological role, catalyzes the formation of S-adenosylmethionine from methionine and ATP. This is S-adenosylmethionine synthase from Methanococcoides burtonii (strain DSM 6242 / NBRC 107633 / OCM 468 / ACE-M).